We begin with the raw amino-acid sequence, 1182 residues long: DNA-directed RNA polymerase subunit beta' (1182 aa).

4 residues coordinate Zn(2+): cysteine 59, cysteine 61, cysteine 74, and cysteine 77. The Mg(2+) site is built by aspartate 449, aspartate 451, and aspartate 453. Positions 794, 868, 875, and 878 each coordinate Zn(2+).

The protein belongs to the RNA polymerase beta' chain family. As to quaternary structure, the RNAP catalytic core consists of 2 alpha, 1 beta, 1 beta' and 1 omega subunit. When a sigma factor is associated with the core the holoenzyme is formed, which can initiate transcription. The cofactor is Mg(2+). Zn(2+) is required as a cofactor.

The catalysed reaction is RNA(n) + a ribonucleoside 5'-triphosphate = RNA(n+1) + diphosphate. DNA-dependent RNA polymerase catalyzes the transcription of DNA into RNA using the four ribonucleoside triphosphates as substrates. The protein is DNA-directed RNA polymerase subunit beta' of Clostridium acetobutylicum (strain ATCC 824 / DSM 792 / JCM 1419 / IAM 19013 / LMG 5710 / NBRC 13948 / NRRL B-527 / VKM B-1787 / 2291 / W).